The primary structure comprises 1308 residues: Cilia- and flagella-associated protein 57 C (1308 aa).

7 WD repeats span residues 57–99 (NEYR…RRKN), 110–154 (YNIK…KCLG), 415–454 (NHTG…IKIS), 504–546 (SPFK…NPSQ), 551–590 (GHTG…QHQQ), 645–689 (LLDI…GKFT), and 694–733 (HDER…ARGM). Residues 779 to 1000 (LNSRDDRIRQ…RDKIDGQKKI (222 aa)) adopt a coiled-coil conformation.

Belongs to the CFAP57 family. As to quaternary structure, forms a heterodimer with CFAP57A. Associates with components of the nexin-dynein regulatory complex (N-DRC) and the CFAP184:CFAP263 complex.

It is found in the cell projection. Its subcellular location is the cilium. Associates with components of the nexin-dynein regulatory complex (N-DRC), a key regulator of ciliary/flagellar motility, and might act as an inner dynein arm (IDA) hub or linkage. In Tetrahymena thermophila (strain SB210), this protein is Cilia- and flagella-associated protein 57 C (CFAP57C).